Here is a 376-residue protein sequence, read N- to C-terminus: Alpha-2,8-sialyltransferase 8E (376 aa).

Residues 17-37 traverse the membrane as a helical segment; the sequence is TLLFIFICAFALVTLLQQILY. Asn56 carries an N-linked (GlcNAc...) asparagine glycan. 2 disulfide bridges follow: Cys164-Cys313 and Cys178-Cys373. Residues Asn192 and 214–216 each bind substrate; that span reads NPS. N-linked (GlcNAc...) asparagine glycosylation is present at Asn241. Residue 300–302 coordinates substrate; sequence STG. The Proton donor/acceptor role is filled by His348.

The protein belongs to the glycosyltransferase 29 family. As to expression, expressed in liver.

It is found in the golgi apparatus membrane. It carries out the reaction a ganglioside GT1b (d18:1(4E)) + CMP-N-acetyl-beta-neuraminate = a ganglioside GQ1b (d18:1(4E)) + CMP + H(+). The catalysed reaction is a ganglioside GQ1c (d18:1(4E)) + CMP-N-acetyl-beta-neuraminate = a ganglioside GP1c (d18:1(4E)) + CMP + H(+). It catalyses the reaction a ganglioside GD3 (d18:1(4E)) + CMP-N-acetyl-beta-neuraminate = a ganglioside GT3 (d18:1(4E)) + CMP + H(+). The enzyme catalyses a ganglioside GD1a (d18:1(4E)) + CMP-N-acetyl-beta-neuraminate = a ganglioside GT1a (d18:1(4E)) + CMP + H(+). It carries out the reaction a ganglioside GM1b (d18:1(4E)) + CMP-N-acetyl-beta-neuraminate = a ganglioside GD1c (d18:1(4E)) + CMP + H(+). It functions in the pathway protein modification; protein glycosylation. Involved in the synthesis of gangliosides GD1c, GT1a, GQ1b, GP1c and GT3 from GD1a, GT1b, GM1b and GD3 respectively. This chain is Alpha-2,8-sialyltransferase 8E, found in Rattus norvegicus (Rat).